The chain runs to 476 residues: uncharacterized protein (476 aa).

The first 24 residues, 1–24, serve as a signal peptide directing secretion; sequence MIRKSATGVIVALAVIWGGGTWYT.

It to E.coli YdgA and H.influenzae HI_1236.

This is an uncharacterized protein from Escherichia coli (strain K12).